The chain runs to 158 residues: MSQLTHFDSAGQAHMVDVGDKAVTHRVAVATGTIRMLPETFALVRDGNAKKGDVLGIARVAAIQGSKRTSDLIPLCHPLALTKVAVEFELNEAGHSVRCTVRAETRGQTGVEMEALTAVQVGLLTIYDMCKAVDRGMVIGDVRLMEKRGGKSGDWVAD.

Substrate-binding positions include 75-77 (LCH) and 113-114 (ME). The active site involves D128.

This sequence belongs to the MoaC family. As to quaternary structure, homohexamer; trimer of dimers.

The enzyme catalyses (8S)-3',8-cyclo-7,8-dihydroguanosine 5'-triphosphate = cyclic pyranopterin phosphate + diphosphate. It functions in the pathway cofactor biosynthesis; molybdopterin biosynthesis. Its function is as follows. Catalyzes the conversion of (8S)-3',8-cyclo-7,8-dihydroguanosine 5'-triphosphate to cyclic pyranopterin monophosphate (cPMP). In Ralstonia pickettii (strain 12J), this protein is Cyclic pyranopterin monophosphate synthase.